Here is a 376-residue protein sequence, read N- to C-terminus: Succinyl-diaminopimelate desuccinylase (376 aa).

Residue H66 coordinates Zn(2+). Residue D68 is part of the active site. Position 99 (D99) interacts with Zn(2+). The Proton acceptor role is filled by E133. Zn(2+)-binding residues include E134, E162, and H348.

The protein belongs to the peptidase M20A family. DapE subfamily. Homodimer. It depends on Zn(2+) as a cofactor. Requires Co(2+) as cofactor.

The enzyme catalyses N-succinyl-(2S,6S)-2,6-diaminopimelate + H2O = (2S,6S)-2,6-diaminopimelate + succinate. Its pathway is amino-acid biosynthesis; L-lysine biosynthesis via DAP pathway; LL-2,6-diaminopimelate from (S)-tetrahydrodipicolinate (succinylase route): step 3/3. Its function is as follows. Catalyzes the hydrolysis of N-succinyl-L,L-diaminopimelic acid (SDAP), forming succinate and LL-2,6-diaminopimelate (DAP), an intermediate involved in the bacterial biosynthesis of lysine and meso-diaminopimelic acid, an essential component of bacterial cell walls. The chain is Succinyl-diaminopimelate desuccinylase from Xanthomonas oryzae pv. oryzae (strain MAFF 311018).